A 366-amino-acid polypeptide reads, in one-letter code: Photosynthetic reaction center cytochrome c subunit (366 aa).

A signal peptide spans 1 to 22 (MALAVRISTLTVAVTAAALLAG). Residue Cys23 is the site of N-palmitoyl cysteine attachment. Cys23 carries S-diacylglycerol cysteine lipidation. Heme is bound by residues Met94, Cys107, Cys110, His111, Met129, His143, Cys151, Cys154, His155, Met238, Cys249, Cys252, His253, Cys309, Cys312, and His313.

As to quaternary structure, component of the photosynthetic reaction center composed of protein subunits L (PufL), M (PufM), H (PuhA) and cytochrome C (PufC). The reaction center interacts with light-harvesting antenna complex LH1. Binds 4 heme groups per subunit.

The protein resides in the cellular chromatophore membrane. Its function is as follows. The reaction center of purple bacteria contains a tightly bound cytochrome molecule which re-reduces the photo oxidized primary electron donor. This chain is Photosynthetic reaction center cytochrome c subunit (pufC), found in Rubrivivax gelatinosus (strain NBRC 100245 / IL144).